The following is a 634-amino-acid chain: DNA gyrase subunit B (634 aa).

Positions 1 to 220 (MSYDASAIRV…EEVFLDKGGV (220 aa)) are ATPase domain. Positions 221–390 (ASFAKALAEG…EAARKARELV (170 aa)) are transducer domain. The 119-residue stretch at 416-534 (AELFIVEGDS…RGHVYIAQPP (119 aa)) folds into the Toprim domain. Mg(2+) is bound by residues glutamate 422, aspartate 499, and aspartate 501.

It belongs to the type II topoisomerase GyrB family. In terms of assembly, heterotetramer, composed of two GyrA and two GyrB chains. Non-hydrolyzable ATP analogs induce dimerization, novobiocin also induces a small amount of dimerization. The two subunits form an intertwined dimer where the GyrB ATPase transducer helix of 1 subunit connects to the Toprim domain of the other GyrB subunit through a 10 residue linker. In the heterotetramer, GyrA contains the active site tyrosine that forms a covalent intermediate with the DNA, while GyrB binds cofactors and catalyzes ATP hydrolysis. Mg(2+) serves as cofactor. Requires Mn(2+) as cofactor. The cofactor is Ca(2+).

It is found in the cytoplasm. The enzyme catalyses ATP-dependent breakage, passage and rejoining of double-stranded DNA.. In terms of biological role, a type II topoisomerase that negatively supercoils closed circular double-stranded (ds) DNA in an ATP-dependent manner. It probably also catalyzes the interconversion of other topological isomers of double-stranded DNA rings, including catenanes. Relaxes negatively supercoiled DNA in an ATP-independent manner. At comparable concentrations T.thermophilus gyrase does not introduce as many negative supercoils into DNA as the E.coli enzyme. Its function is as follows. Negative supercoiling favors strand separation, and DNA replication, transcription, recombination and repair, all of which involve strand separation. Type II topoisomerases break and join 2 DNA strands simultaneously in an ATP-dependent manner. In Thermus thermophilus (strain ATCC 27634 / DSM 579 / HB8), this protein is DNA gyrase subunit B.